A 424-amino-acid polypeptide reads, in one-letter code: Inhibin beta A chain (424 aa).

The signal sequence occupies residues 1-20; the sequence is MPLLWLRGFLLASCWIIVRS. Residues 21–308 constitute a propeptide that is removed on maturation; it reads SPTPGSEGHG…EDHPHRRRRR (288 aa). A glycan (N-linked (GlcNAc...) asparagine) is linked at Asn165. Basic and acidic residues predominate over residues 264–275; the sequence is EVDGDGKKKDGS. Residues 264 to 306 form a disordered region; that stretch reads EVDGDGKKKDGSDGGLEEEKEQSHRPFLMLQARQSEDHPHRRR. 4 disulfide bridges follow: Cys312/Cys320, Cys319/Cys389, Cys348/Cys421, and Cys352/Cys423.

This sequence belongs to the TGF-beta family. As to quaternary structure, dimeric, linked by one or more disulfide bonds. Inhibin A is a dimer of alpha/INHA and beta-A/INHBA. Activin A is a homodimer of beta-A/INHBA. Activin AB is a dimer of beta-A/INHBA and beta-B/INHBB. Interacts with FST and FSTL3; these interactions prevent activin A interaction to its type II receptor. Activin A interacts with ACVR2A. Activin A interacts with BMPR2. Inhibin A interacts with ACVR1; this interaction creates a non-signaling complex (NSC) that inhibits ACVR1-mediated BMP signaling. Inhibin A interacts with ACVR2A.

The protein resides in the secreted. In terms of biological role, inhibins/activins are involved in regulating a number of diverse functions such as hypothalamic and pituitary hormone secretion, gonadal hormone secretion, germ cell development and maturation, erythroid differentiation, insulin secretion, nerve cell survival, embryonic axial development or bone growth, depending on their subunit composition. Activin A is a homodimer of INHBA that plays a role in several essential biological processes including embryonic development, stem cell maintenance and differentiation, haematopoiesis, cell proliferation and tissue fibrosis. Signals through type I (such as ACVR1B or ACVR1C) and type II receptors (such as ACVR2A, ACVR2B or BMPR2) which, upon ligand binding, phosphorylate SMAD2 and SMAD3 intracellular signaling mediators that form a complex with SMAD4, translocate to the nucleus and modulate gene expression. Can also activate alternative non-canonical intracellular signaling pathways including the p38 MAPK, extracellular signal-regulated kinases 1/2 (ERK1/2) and c-Jun N-terminal kinases (JNKs) to modulate cell migration and differentiation. Alternatively, promotes osteoblastic differentiation via ACVRL1-SMAD1/5/9 pathway. In addition, can engage the type I receptor ACVR1 to form an ACVR1-activin A-type II receptor non-signaling complex (NSC) that renders receptors unavailable for engagement with BMPs, hence resulting in an apparent inhibition of ACVR1-mediated BMP signaling. Functionally, inhibin A is a dimer of alpha/INHA and beta-A/INHBA that functions as a feedback regulator in the hypothalamic-pituitary-gonadal (HPG) axis. Inhibits the secretion of FSH from the anterior pituitary gland by acting on pituitary gonadotrope cells. Antagonizes activin A by binding to the proteoglycan, betaglycan, and forming a stable complex with and, thereby, sequestering type II activin receptors while excluding type I receptor. This Rattus norvegicus (Rat) protein is Inhibin beta A chain (Inhba).